The sequence spans 382 residues: Serine protease 43 (382 aa).

A signal peptide spans 1 to 27 (MGGFCGADRGGFLALLVWLQLLQPLFS). The segment at 30–97 (YKPREDSGVM…SGTTTKITLE (68 aa)) is disordered. Composition is skewed to polar residues over residues 56-68 (AQQSRLKSLSISH) and 85-95 (GSPSGTTTKIT). Residues 119 to 355 (VDPGSLSAGR…YNEWVSYVLS (237 aa)) form the Peptidase S1 domain. A disulfide bridge connects residues C144 and C160. Residues H159 and D205 each act as charge relay system in the active site. 3 disulfide bridges follow: C239–C313, C272–C293, and C303–C331. Residue S307 is the Charge relay system of the active site. The chain crosses the membrane as a helical span at residues 362 to 382 (PMGVLVLYLSLVFPLALLVAL).

The protein belongs to the peptidase S1 family. As to expression, testis-specific. Expressed in germ cells at the stages from late pachytene spermatocytes to spermatids.

Its subcellular location is the cell membrane. Functionally, plays a role in spermatogenesis. Involved in germ cell survival during meiosis. Lacks protease activity in vitro. This chain is Serine protease 43, found in Mus musculus (Mouse).